Consider the following 787-residue polypeptide: Mitochondrial 15S rRNA processing factor CCM1 (787 aa).

Residues Met1–Met12 constitute a mitochondrion transit peptide. The segment covering Gln38–Lys48 has biased composition (basic residues). A disordered region spans residues Gln38–Asn58. 3 PPR repeats span residues Ser286 to Pro320, Ser321 to Thr356, and Asp359 to Ile393.

It belongs to the CCM1 family. In terms of assembly, binds to mitochondrial small subunit 15S rRNA.

It is found in the mitochondrion. Regulates mitochondrial small subunit maturation by controlling 15S rRNA 5'-end processing. Localizes to the 5' precursor of the 15S rRNA in a position that is subsequently occupied by mS47 in the mature yeast mtSSU. Uses structure and sequence-specific RNA recognition, binding to a single-stranded region of the precursor and specifically recognizing bases -6 to -1. The exchange of Ccm1 for mS47 is coupled to the irreversible removal of precursor rRNA that is accompanied by conformational changes of the mitoribosomal proteins uS5m and mS26. These conformational changes signal completion of 5'-end rRNA processing through protection of the mature 5'-end of the 15S rRNA and stabilization of mS47. The removal of the 5' precursor together with the dissociation of Ccm1 may be catalyzed by the 5'-3' exoribonuclease Pet127. Involved in the specific removal of group I introns in mitochondrial encoded transcripts. The polypeptide is Mitochondrial 15S rRNA processing factor CCM1 (CCM1) (Debaryomyces hansenii (strain ATCC 36239 / CBS 767 / BCRC 21394 / JCM 1990 / NBRC 0083 / IGC 2968) (Yeast)).